The following is a 118-amino-acid chain: MICOS complex subunit MIC13 (118 aa).

The Mitochondrial matrix portion of the chain corresponds to 1–7 (MVARVWS). Residues 8–26 (LMRFLIKGSVAGGAVYLVY) traverse the membrane as a helical segment. At 27 to 118 (DQELLGPSDK…GWEYVKARTK (92 aa)) the chain is on the mitochondrial intermembrane side.

It belongs to the MICOS complex subunit Mic13 family. As to quaternary structure, component of the mitochondrial contact site and cristae organizing system (MICOS) complex, composed of at least MICOS10/MIC10, CHCHD3/MIC19, CHCHD6/MIC25, APOO/MIC26, MICOS13/MIC13, APOOL/MIC27 and IMMT/MIC60. The MICOS complex associates with mitochondrial outer membrane proteins SAMM50, MTX1 and MTX2 (together described as components of the mitochondrial outer membrane sorting assembly machinery (SAM) complex) and DNAJC11, mitochondrial inner membrane protein TMEM11 and with HSPA9. The MICOS and SAM complexes together with DNAJC11 are part of a large protein complex spanning both membranes termed the mitochondrial intermembrane space bridging (MIB) complex.

Its subcellular location is the mitochondrion inner membrane. Component of the MICOS complex, a large protein complex of the mitochondrial inner membrane that plays crucial roles in the maintenance of crista junctions, inner membrane architecture, and formation of contact sites to the outer membrane. Constituent of mature MICOS complex, it is required for the formation of cristae junction (CJ) and maintenance of cristae morphology. Required for the incorporation of MICOS10/MIC10 into the MICOS complex. The polypeptide is MICOS complex subunit MIC13 (Homo sapiens (Human)).